The chain runs to 512 residues: MEEFQRYLKLNRSQQHYFLYPLIFQEYIYALAHDHGLNRNRSIFLENVGYNKFSLLIVKRAIERMYQYEQKHLILFDNDFNQNRFFGRNNNFSFQMISEGFAVIVEIPFYLRLLSSLEKKGIVKSNNLRSIHSIFPFLEDNFSHLIYVLEILIPYPAHLEILIQTLRYWVKDASSLHLLRFFLHEYRSWNTPNKASSFFSKRNQRFFFVLYNSHICEYESIFVFLRNQSSHLCSTSSGTLLERIYFYGKLEHLVLVEAFAKAFQANLWLFKDPFMHYVRYQGKSILASKGTPPLMKKWTYYFVNLWECRFYLWSQPGRICINQLYNNSLSLLGYISSAGLNPSMVRSQMLENAFIIDNPIKKFDTLVPIVPLIGSLAKARFCNVLGHPISKAVWTDLSDSDIIVRFGRICRNLSHFFSGSSQKKSLYRIKYILRLSCARTLARKHKSTVRAFLKRSGSGLLEEFFTAEEQVLYLTFPRASSTSHRLYRRRIWYLDIICINDLASHELNDSLV.

This sequence belongs to the intron maturase 2 family. MatK subfamily.

Its subcellular location is the plastid. The protein resides in the chloroplast. In terms of biological role, usually encoded in the trnK tRNA gene intron. Probably assists in splicing its own and other chloroplast group II introns. The sequence is that of Maturase K from Daucus carota (Wild carrot).